The sequence spans 229 residues: PKHD-type hydroxylase BBta_3541 (229 aa).

One can recognise a Fe2OG dioxygenase domain in the interval glutamine 78–serine 180. Fe cation is bound by residues histidine 98, aspartate 100, and histidine 161. Residue arginine 171 participates in 2-oxoglutarate binding.

Fe(2+) serves as cofactor. The cofactor is L-ascorbate.

In Bradyrhizobium sp. (strain BTAi1 / ATCC BAA-1182), this protein is PKHD-type hydroxylase BBta_3541.